A 190-amino-acid chain; its full sequence is Capsid protein (190 aa).

Residue Met1 is modified to N-acetylmethionine; by host.

This sequence belongs to the tymoviruses capsid protein family.

It is found in the virion. In terms of biological role, self-assembles to form a T=3 icosahedral capsid composed of 180 copies of the capsid protein. The capsid encapsulates the single-stranded RNA genome. In Atropa belladonna (Belladonna), this protein is Capsid protein.